The sequence spans 239 residues: Apoptosis regulator Bcl-2 (239 aa).

The short motif at 10 to 30 (DNREIVMKYIHYKLSQRGYEW) is the BH4 element. The segment at 39-85 (PPGAAPAPGIFSSQPGHTPHPAASRDPVARTSPLQTPAAPGAAAGPA) is disordered. Thr69 bears the Phosphothreonine; by MAPK8 mark. A Phosphoserine; by MAPK8 and PKC modification is found at Ser70. The span at 75 to 85 (PAAPGAAAGPA) shows a compositional bias: low complexity. Ser87 is modified (phosphoserine; by MAPK8). The required for interaction with SEPTIN4 isoform ARTS. Required XIAP-mediated ubiquitination and apoptosis stretch occupies residues 92–107 (VVHLTLRQAGDDFSRR). Residues 93-107 (VHLTLRQAGDDFSRR) carry the BH3 motif. A BH1 motif is present at residues 136–155 (ELFRDGVNWGRIVAFFEFGG). The BH2 signature appears at 187–202 (TWIQDNGGWDAFVELY). A helical transmembrane segment spans residues 212-233 (FSWLSLKTLLSLALVGACITLG).

It belongs to the Bcl-2 family. As to quaternary structure, forms homodimers, and heterodimers with BAX, BAD, BAK and Bcl-X(L). Heterodimerization with BAX requires intact BH1 and BH2 motifs, and is necessary for anti-apoptotic activity. Part of a complex composed of SEPTIN4 isoform ARTS, XIAP and BCL2, within the complex interacts (via BH3 domain) with SEPTIN4 isoform ARTS and XIAP, SEPTIN4 isoform ARTS acts as a scaffold protein and stabilizes the complex. Component of the complex, at least composed of LRPPRC, BECN1 and BCL2; the interactions prevent BECN1 from forming an autophagy-inducing complex with PIK3C3. Interacts with EI24. Also interacts with APAF1, BBC3, BCL2L1, BNIPL, MRPL41 and TP53BP2. Binding to FKBP8 seems to target BCL2 to the mitochondria and probably interferes with the binding of BCL2 to its targets. Interacts with BAG1 in an ATP-dependent manner. Interacts with RAF1 (the 'Ser-338' and 'Ser-339' phosphorylated form). Interacts (via the BH4 domain) with EGLN3; the interaction prevents the formation of the BAX-BCL2 complex and inhibits the anti-apoptotic activity of BCL2. Interacts with G0S2; this interaction also prevents the formation of the anti-apoptotic BAX-BCL2 complex. Interacts with RTL10/BOP. Interacts with the SCF(FBXO10) complex. Interacts (via the loop between motifs BH4 and BH3) with NLRP1 (via LRR repeats), but not with NLRP2, NLRP3, NLRP4, PYCARD, nor MEFV. Interacts with GIMAP3/IAN4, GIMAP4/IAN1 and GIMAP5/IAN5. Interacts with BCAP31. Interacts with IRF3; the interaction is inhibited by Sendai virus infection. Interacts with BECN1; thereby inhibiting autophagy in non-starvation conditions. Interacts with AMBRA1; thereby inhibiting autophagy. In terms of assembly, (Microbial infection) Interacts with Toxoplasma gondii ROP17; the interaction probably promotes BCL2 phosphorylation and degradation. Phosphorylation/dephosphorylation on Ser-70 regulates anti-apoptotic activity. Growth factor-stimulated phosphorylation on Ser-70 by PKC is required for the anti-apoptosis activity and occurs during the G2/M phase of the cell cycle. In the absence of growth factors, BCL2 appears to be phosphorylated by other protein kinases such as ERKs and stress-activated kinases. Phosphorylated by MAPK8/JNK1 at Thr-69, Ser-70 and Ser-87, which stimulates starvation-induced autophagy. Dephosphorylated by protein phosphatase 2A (PP2A). In terms of processing, proteolytically cleaved by caspases during apoptosis. The cleaved protein, lacking the BH4 motif, has pro-apoptotic activity, causes the release of cytochrome c into the cytosol promoting further caspase activity. Post-translationally, monoubiquitinated by PRKN, leading to an increase in its stability. Ubiquitinated by SCF(FBXO10), leading to its degradation by the proteasome. Ubiquitinated by XIAP, leading to its degradation by the proteasome. As to expression, expressed in a variety of tissues.

Its subcellular location is the mitochondrion outer membrane. It localises to the nucleus membrane. It is found in the endoplasmic reticulum membrane. The protein resides in the cytoplasm. In terms of biological role, suppresses apoptosis in a variety of cell systems including factor-dependent lymphohematopoietic and neural cells. Regulates cell death by controlling the mitochondrial membrane permeability. Appears to function in a feedback loop system with caspases. Inhibits caspase activity either by preventing the release of cytochrome c from the mitochondria and/or by binding to the apoptosis-activating factor (APAF-1). Also acts as an inhibitor of autophagy: interacts with BECN1 and AMBRA1 during non-starvation conditions and inhibits their autophagy function. May attenuate inflammation by impairing NLRP1-inflammasome activation, hence CASP1 activation and IL1B release. The sequence is that of Apoptosis regulator Bcl-2 (BCL2) from Homo sapiens (Human).